The chain runs to 841 residues: DNA ligase (841 aa).

Residues 33-37 (DAQYD), 82-83 (SL), and E114 each bind NAD(+). Residue K116 is the N6-AMP-lysine intermediate of the active site. NAD(+) is bound by residues R137, E174, K300, and K324. Zn(2+) is bound by residues C418, C421, C436, and C442. In terms of domain architecture, BRCT spans 758–841 (EKTGPLDGQT…AFLGEHGQQR (84 aa)).

It belongs to the NAD-dependent DNA ligase family. LigA subfamily. The cofactor is Mg(2+). Mn(2+) serves as cofactor.

The catalysed reaction is NAD(+) + (deoxyribonucleotide)n-3'-hydroxyl + 5'-phospho-(deoxyribonucleotide)m = (deoxyribonucleotide)n+m + AMP + beta-nicotinamide D-nucleotide.. Functionally, DNA ligase that catalyzes the formation of phosphodiester linkages between 5'-phosphoryl and 3'-hydroxyl groups in double-stranded DNA using NAD as a coenzyme and as the energy source for the reaction. It is essential for DNA replication and repair of damaged DNA. The protein is DNA ligase of Xanthomonas oryzae pv. oryzae (strain KACC10331 / KXO85).